The primary structure comprises 360 residues: Histidinol-phosphate aminotransferase (360 aa).

Residue lysine 208 is modified to N6-(pyridoxal phosphate)lysine.

This sequence belongs to the class-II pyridoxal-phosphate-dependent aminotransferase family. Histidinol-phosphate aminotransferase subfamily. In terms of assembly, homodimer. It depends on pyridoxal 5'-phosphate as a cofactor.

It catalyses the reaction L-histidinol phosphate + 2-oxoglutarate = 3-(imidazol-4-yl)-2-oxopropyl phosphate + L-glutamate. It participates in amino-acid biosynthesis; L-histidine biosynthesis; L-histidine from 5-phospho-alpha-D-ribose 1-diphosphate: step 7/9. This is Histidinol-phosphate aminotransferase (hisC) from Lactococcus lactis subsp. lactis (strain IL1403) (Streptococcus lactis).